We begin with the raw amino-acid sequence, 770 residues long: Protein PAT1 homolog 1 (770 aa).

Residues 1 to 26 form a disordered region; it reads MFRYESLEDCPLDEDEDAFQGLGEED. Residues 1–84 form a region A; interaction with DDX6/RCK region; sequence MFRYESLEDC…EMDLLGDHEE (84 aa). The involved in nuclear foci localization stretch occupies residues 1–397; that stretch reads MFRYESLEDC…HRSSHQDHLR (397 aa). Acidic residues predominate over residues 7-26; that stretch reads LEDCPLDEDEDAFQGLGEED. The tract at residues 85–388 is region N; interaction with decapping machinery; that stretch reads NLAERLSKMV…LNGAGDRGSH (304 aa). The Nuclear export signal signature appears at 86 to 95; it reads LAERLSKMVI. S177 is subject to Phosphoserine. The residue at position 178 (T178) is a Phosphothreonine. A phosphoserine mark is found at S179 and S184. Residue T194 is modified to Phosphothreonine. Residues R217, R223, and R263 each carry the asymmetric dimethylarginine modification. The tract at residues 223-397 is involved in RNA-binding; sequence RYPAPYGERM…HRSSHQDHLR (175 aa). S278 bears the Phosphoserine mark. The residue at position 284 (R284) is an Asymmetric dimethylarginine. Disordered regions lie at residues 315-344 and 360-400; these read FRAFFSAPPSATPPPQQHPPGPGPHLQNLR and QHRR…RKDP. Pro residues predominate over residues 324-337; sequence SATPPPQQHPPGPG. Positions 367–380 are enriched in low complexity; sequence QRQQQNRNQHRNLN. R385 carries the post-translational modification Omega-N-methylarginine. Over residues 385–400 the composition is skewed to basic and acidic residues; that stretch reads RGSHRSSHQDHLRKDP. The segment at 389-448 is region H; the sequence is RSSHQDHLRKDPYANLMLQREKDWVSKIQMMQLQSTDPYLDDFYYQNYFEKLEKLSAAEE. The interval 398 to 770 is involved in nuclear speckle localization; sequence KDPYANLMLQ…TKLQLVQGIR (373 aa). The region C stretch occupies residues 449-770; that stretch reads IQGDGPKKER…TKLQLVQGIR (322 aa).

Belongs to the PAT1 family. In terms of assembly, interacts (via region A) with DDX6/RCK. Interacts (via region H and region C) with LSM1 and LSM4. Interacts (via region N) with DCP1A, DCP2, EDC3, EDC4 and XRN1. Interacts with the CCR4-NOT complex. Interacts with the Lsm-containing SMN-Sm protein complex. Interacts with EIF4ENIF1/4E-T.

It is found in the cytoplasm. Its subcellular location is the P-body. It localises to the nucleus. The protein localises to the PML body. The protein resides in the nucleus speckle. In terms of biological role, RNA-binding protein involved in deadenylation-dependent decapping of mRNAs, leading to the degradation of mRNAs. Acts as a scaffold protein that connects deadenylation and decapping machinery. Required for cytoplasmic mRNA processing body (P-body) assembly. The chain is Protein PAT1 homolog 1 (PATL1) from Pongo abelii (Sumatran orangutan).